We begin with the raw amino-acid sequence, 243 residues long: 1-(5-phosphoribosyl)-5-[(5-phosphoribosylamino)methylideneamino] imidazole-4-carboxamide isomerase (243 aa).

D8 acts as the Proton acceptor in catalysis. D130 serves as the catalytic Proton donor.

The protein belongs to the HisA/HisF family.

It is found in the cytoplasm. It carries out the reaction 1-(5-phospho-beta-D-ribosyl)-5-[(5-phospho-beta-D-ribosylamino)methylideneamino]imidazole-4-carboxamide = 5-[(5-phospho-1-deoxy-D-ribulos-1-ylimino)methylamino]-1-(5-phospho-beta-D-ribosyl)imidazole-4-carboxamide. It functions in the pathway amino-acid biosynthesis; L-histidine biosynthesis; L-histidine from 5-phospho-alpha-D-ribose 1-diphosphate: step 4/9. In Acinetobacter baumannii (strain AB307-0294), this protein is 1-(5-phosphoribosyl)-5-[(5-phosphoribosylamino)methylideneamino] imidazole-4-carboxamide isomerase.